Here is a 954-residue protein sequence, read N- to C-terminus: Protein translocase subunit SecA (954 aa).

Residues Gln86, 104-108 (GEGKT), and Asp494 contribute to the ATP site. Residues 520–549 (LDPDNPLGSASTTSRGGGQGFGPASPKPKK) are disordered.

It belongs to the SecA family. Monomer and homodimer. Part of the essential Sec protein translocation apparatus which comprises SecA, SecYEG and auxiliary proteins SecDF. Other proteins may also be involved.

It localises to the cell inner membrane. The protein localises to the cellular thylakoid membrane. It is found in the cytoplasm. The catalysed reaction is ATP + H2O + cellular proteinSide 1 = ADP + phosphate + cellular proteinSide 2.. Its function is as follows. Part of the Sec protein translocase complex. Interacts with the SecYEG preprotein conducting channel. Has a central role in coupling the hydrolysis of ATP to the transfer of proteins into and across the cell membrane, serving as an ATP-driven molecular motor driving the stepwise translocation of polypeptide chains across the membrane. In terms of biological role, probably participates in protein translocation into and across both the cytoplasmic and thylakoid membranes in cyanobacterial cells. The sequence is that of Protein translocase subunit SecA from Synechococcus sp. (strain JA-3-3Ab) (Cyanobacteria bacterium Yellowstone A-Prime).